Reading from the N-terminus, the 380-residue chain is Cytochrome b (380 aa).

4 consecutive transmembrane segments (helical) span residues 33-53 (FGSL…FLAM), 77-98 (WLIR…YFHI), 113-133 (WNIG…GYVL), and 178-198 (FFAF…LHLL). The heme b site is built by His-83 and His-97. The heme b site is built by His-182 and His-196. His-201 lines the a ubiquinone pocket. A run of 4 helical transmembrane segments spans residues 226–246 (YKDL…ALFS), 288–308 (LGGV…PFLH), 320–340 (VSQF…WIGG), and 347–367 (FIII…VFFP).

Belongs to the cytochrome b family. The cytochrome bc1 complex contains 3 respiratory subunits (MT-CYB, CYC1 and UQCRFS1), 2 core proteins (UQCRC1 and UQCRC2) and probably 6 low-molecular weight proteins. It depends on heme b as a cofactor.

Its subcellular location is the mitochondrion inner membrane. Functionally, component of the ubiquinol-cytochrome c reductase complex (complex III or cytochrome b-c1 complex) that is part of the mitochondrial respiratory chain. The b-c1 complex mediates electron transfer from ubiquinol to cytochrome c. Contributes to the generation of a proton gradient across the mitochondrial membrane that is then used for ATP synthesis. The sequence is that of Cytochrome b (mt-cyb) from Sarda sarda (Atlantic bonito).